Consider the following 401-residue polypeptide: 1-deoxy-D-xylulose 5-phosphate reductoisomerase (401 aa).

Residues threonine 10, glycine 11, serine 12, isoleucine 13, asparagine 38, and asparagine 124 each contribute to the NADPH site. Residue lysine 125 participates in 1-deoxy-D-xylulose 5-phosphate binding. Position 126 (glutamate 126) interacts with NADPH. Aspartate 150 is a Mn(2+) binding site. Residues serine 151, glutamate 152, serine 186, and histidine 209 each contribute to the 1-deoxy-D-xylulose 5-phosphate site. Position 152 (glutamate 152) interacts with Mn(2+). Position 215 (glycine 215) interacts with NADPH. 1-deoxy-D-xylulose 5-phosphate contacts are provided by serine 222, asparagine 227, lysine 228, and glutamate 231. Mn(2+) is bound at residue glutamate 231.

The protein belongs to the DXR family. Requires Mg(2+) as cofactor. Mn(2+) is required as a cofactor.

It catalyses the reaction 2-C-methyl-D-erythritol 4-phosphate + NADP(+) = 1-deoxy-D-xylulose 5-phosphate + NADPH + H(+). It participates in isoprenoid biosynthesis; isopentenyl diphosphate biosynthesis via DXP pathway; isopentenyl diphosphate from 1-deoxy-D-xylulose 5-phosphate: step 1/6. Catalyzes the NADPH-dependent rearrangement and reduction of 1-deoxy-D-xylulose-5-phosphate (DXP) to 2-C-methyl-D-erythritol 4-phosphate (MEP). The protein is 1-deoxy-D-xylulose 5-phosphate reductoisomerase of Vibrio campbellii (strain ATCC BAA-1116).